Consider the following 185-residue polypeptide: Elongation factor P (185 aa).

The protein belongs to the elongation factor P family.

The protein resides in the cytoplasm. It functions in the pathway protein biosynthesis; polypeptide chain elongation. Its function is as follows. Involved in peptide bond synthesis. Stimulates efficient translation and peptide-bond synthesis on native or reconstituted 70S ribosomes in vitro. Probably functions indirectly by altering the affinity of the ribosome for aminoacyl-tRNA, thus increasing their reactivity as acceptors for peptidyl transferase. The chain is Elongation factor P from Oceanobacillus iheyensis (strain DSM 14371 / CIP 107618 / JCM 11309 / KCTC 3954 / HTE831).